The chain runs to 334 residues: Porphobilinogen deaminase (334 aa).

The residue at position 255 (Cys255) is an S-(dipyrrolylmethanemethyl)cysteine.

It belongs to the HMBS family. As to quaternary structure, monomer. Dipyrromethane serves as cofactor.

The enzyme catalyses 4 porphobilinogen + H2O = hydroxymethylbilane + 4 NH4(+). It functions in the pathway porphyrin-containing compound metabolism; protoporphyrin-IX biosynthesis; coproporphyrinogen-III from 5-aminolevulinate: step 2/4. Functionally, tetrapolymerization of the monopyrrole PBG into the hydroxymethylbilane pre-uroporphyrinogen in several discrete steps. This chain is Porphobilinogen deaminase, found in Burkholderia orbicola (strain MC0-3).